A 623-amino-acid polypeptide reads, in one-letter code: Peptidoglycan D,D-transpeptidase MrdA (623 aa).

Residues 17 to 37 (VIVAFGVVVVCFGILIFNLYN) form a helical membrane-spanning segment. The Acyl-ester intermediate role is filled by serine 326.

The protein belongs to the transpeptidase family. MrdA subfamily.

It localises to the cell inner membrane. It carries out the reaction Preferential cleavage: (Ac)2-L-Lys-D-Ala-|-D-Ala. Also transpeptidation of peptidyl-alanyl moieties that are N-acyl substituents of D-alanine.. Its pathway is cell wall biogenesis; peptidoglycan biosynthesis. Its function is as follows. Catalyzes cross-linking of the peptidoglycan cell wall. This chain is Peptidoglycan D,D-transpeptidase MrdA, found in Salmonella typhimurium (strain SL1344).